The primary structure comprises 244 residues: Dirigent protein 18 (244 aa).

The N-terminal stretch at 1 to 25 (MMKQSPFSLLTSIFLIAALFTATTA) is a signal peptide.

The protein belongs to the plant dirigent protein family. In terms of assembly, homodimer.

Its subcellular location is the secreted. The protein resides in the extracellular space. It is found in the apoplast. In terms of biological role, dirigent proteins impart stereoselectivity on the phenoxy radical-coupling reaction, yielding optically active lignans from two molecules of coniferyl alcohol in the biosynthesis of lignans, flavonolignans, and alkaloids and thus plays a central role in plant secondary metabolism. The polypeptide is Dirigent protein 18 (DIR18) (Arabidopsis thaliana (Mouse-ear cress)).